We begin with the raw amino-acid sequence, 569 residues long: MHTLTGFSLVSLLSFGYLSWDWAKPSFVADGPGEAGEQPSAAPPQPPHIIFILTDDQGYHDVGYHGSDIETPTLDRLAAKGVKLENYYIQPICTPSRSQLLTGRYQIHTGLQHSIIRPQQPNCLPLDQVTLPQKLQEAGYSTHMVGKWHLGFYRKECLPTRRGFDTFLGSLTGNVDYYTYDNCDGPGVCGFDLHEGENVAWGLSGQYSTMLYAQRASHILASHSPQRPLFLYVAFQAVHTPLQSPREYLYRYRTMGNVARRKYAAMVTCMDEAVRNITWALKRYGFYNNSVIIFSSDNGGQTFSGGSNWPLRGRKGTYWEGGVRGLGFVHSPLLKRKQRTSRALMHITDWYPTLVGLAGGTTSAADGLDGYDVWPAISEGRASPRTEILHNIDPLYNHAQHGSLEGGFGIWNTAVQAAIRVGEWKLLTGDPGYGDWIPPQTLATFPGSWWNLERMASVRQAVWLFNISADPYEREDLAGQRPDVVRTLLARLAEYNRTAIPVRYPAENPRAHPDFNGGAWGPWASDEEEEEEEGRARSFSRGRRKKKCKICKLRSFFRKLNTRLMSQRI.

The N-terminal stretch at methionine 1 to alanine 23 is a signal peptide. The Ca(2+) site is built by aspartate 55, aspartate 56, and cysteine 93. The active-site Nucleophile is cysteine 93. Cysteine 93 carries the 3-oxoalanine (Cys) modification. A substrate-binding site is contributed by lysine 147. Residue histidine 149 is part of the active site. Histidine 239 contacts substrate. Asparagine 276 and asparagine 288 each carry an N-linked (GlcNAc...) asparagine glycan. 2 residues coordinate Ca(2+): aspartate 297 and asparagine 298. Lysine 315 lines the substrate pocket. Asparagine 466 and asparagine 496 each carry an N-linked (GlcNAc...) asparagine glycan. The segment at arginine 510–phenylalanine 539 is disordered.

Belongs to the sulfatase family. The cofactor is Ca(2+). The oxidation of Cys-93 residue to 3-oxoalanine (also known as C(alpha)-formylglycine) by SUMF1/Sulfatase-modifying factor 1, seems critical for catalytic activity. As to expression, expressed in placenta, in embryonic stem cells, fetal eyes and lens.

The protein localises to the secreted. It is found in the endoplasmic reticulum. Functionally, displays arylsulfatase activity at neutral pH, when co-expressed with SUMF1; arylsulfatase activity is measured in the secretion medium of retinal cell line, but no activity is recorded when measured in cell extracts. Lacks arylsulfatase activity. The chain is Arylsulfatase I (ARSI) from Homo sapiens (Human).